Consider the following 144-residue polypeptide: Deoxyuridine 5'-triphosphate nucleotidohydrolase (144 aa).

Substrate contacts are provided by residues 63 to 65 (RSG), asparagine 76, and 80 to 82 (TVD).

It belongs to the dUTPase family. The cofactor is Mg(2+).

The catalysed reaction is dUTP + H2O = dUMP + diphosphate + H(+). Its pathway is pyrimidine metabolism; dUMP biosynthesis; dUMP from dCTP (dUTP route): step 2/2. This enzyme is involved in nucleotide metabolism: it produces dUMP, the immediate precursor of thymidine nucleotides and it decreases the intracellular concentration of dUTP so that uracil cannot be incorporated into DNA. In Treponema denticola (strain ATCC 35405 / DSM 14222 / CIP 103919 / JCM 8153 / KCTC 15104), this protein is Deoxyuridine 5'-triphosphate nucleotidohydrolase.